A 587-amino-acid polypeptide reads, in one-letter code: Bifunctional lycopene cyclase/phytoene synthase (587 aa).

The interval 1–236 (MGLDYILVHV…IVFGLVCIDY (236 aa)) is lycopene beta-cyclase. A run of 7 helical transmembrane segments spans residues 5-25 (YILV…LVYW), 35-55 (KIST…SYLV), 65-85 (NGVI…FFII), 91-111 (SLVY…GTVA), 116-136 (LIGA…LCFG), 145-165 (IITW…GFII), and 218-238 (LFFL…DYAI). The tract at residues 243-587 (CELVQSPQAV…VAYRAMAWRK (345 aa)) is phytoene synthase.

It in the N-terminal section; belongs to the lycopene beta-cyclase family. In the C-terminal section; belongs to the phytoene/squalene synthase family.

The protein localises to the membrane. It carries out the reaction all-trans-lycopene = gamma-carotene. It catalyses the reaction gamma-carotene = all-trans-beta-carotene. The enzyme catalyses 2 (2E,6E,10E)-geranylgeranyl diphosphate = 15-cis-phytoene + 2 diphosphate. Its pathway is carotenoid biosynthesis; beta-carotene biosynthesis. It functions in the pathway carotenoid biosynthesis; phytoene biosynthesis; all-trans-phytoene from geranylgeranyl diphosphate: step 1/1. Its function is as follows. Bifunctional enzyme that catalyzes the reactions from geranylgeranyl diphosphate to phytoene (phytoene synthase) and lycopene to beta-carotene via the intermediate gamma-carotene (lycopene cyclase). The polypeptide is Bifunctional lycopene cyclase/phytoene synthase (Aspergillus oryzae (strain ATCC 42149 / RIB 40) (Yellow koji mold)).